The sequence spans 501 residues: Bifunctional purine biosynthesis protein PurH (501 aa).

The MGS-like domain maps to 1–144 (MKKRALISVF…KNFKDVVVLS (144 aa)).

Belongs to the PurH family.

It carries out the reaction (6R)-10-formyltetrahydrofolate + 5-amino-1-(5-phospho-beta-D-ribosyl)imidazole-4-carboxamide = 5-formamido-1-(5-phospho-D-ribosyl)imidazole-4-carboxamide + (6S)-5,6,7,8-tetrahydrofolate. The catalysed reaction is IMP + H2O = 5-formamido-1-(5-phospho-D-ribosyl)imidazole-4-carboxamide. The protein operates within purine metabolism; IMP biosynthesis via de novo pathway; 5-formamido-1-(5-phospho-D-ribosyl)imidazole-4-carboxamide from 5-amino-1-(5-phospho-D-ribosyl)imidazole-4-carboxamide (10-formyl THF route): step 1/1. It functions in the pathway purine metabolism; IMP biosynthesis via de novo pathway; IMP from 5-formamido-1-(5-phospho-D-ribosyl)imidazole-4-carboxamide: step 1/1. This Clostridium perfringens (strain SM101 / Type A) protein is Bifunctional purine biosynthesis protein PurH.